A 555-amino-acid polypeptide reads, in one-letter code: GPI-anchor transamidase component PIGS (555 aa).

The Cytoplasmic segment spans residues 2–18 (AATGAAATDLEVVRGKR). A cardiolipin is bound by residues R15 and R18. Residues 19 to 39 (AALFFATVVIVLGLPLWWKTT) traverse the membrane as a helical segment. Topologically, residues 40–517 (ETYRAPLPYS…LHLLYFPDDQ (478 aa)) are lumenal. N267 and N370 each carry an N-linked (GlcNAc...) asparagine glycan. Residues 518–532 (KFAIYIPLFLPMAVP) form a helical membrane-spanning segment. At 533-555 (ILLSLFKIFLETRKSWKKPEKTD) the chain is on the cytoplasmic side.

This sequence belongs to the PIGS family. Heteropentamer. Part of the GPI-anchor transamidase complex, consisting of PIGK, PIGT, PIGS, PIGU and GAA1.

It localises to the endoplasmic reticulum membrane. Its pathway is glycolipid biosynthesis; glycosylphosphatidylinositol-anchor biosynthesis. Component of the glycosylphosphatidylinositol-anchor (GPI-anchor) transamidase (GPI-T) complex that catalyzes the formation of the linkage between a proprotein and a GPI-anchor and participates in GPI anchored protein biosynthesis. This chain is GPI-anchor transamidase component PIGS, found in Bos taurus (Bovine).